The chain runs to 441 residues: Protein dcd1A (441 aa).

The first 23 residues, 1-23 (MKIFNKLIFLIIQCILIISVTNA), serve as a signal peptide directing secretion. Residues N45, N261, N308, and N419 are each glycosylated (N-linked (GlcNAc...) asparagine).

It is found in the secreted. This is Protein dcd1A (dcd1A) from Dictyostelium discoideum (Social amoeba).